The following is a 263-amino-acid chain: Virulence plasmid protein pGP6-D-related protein (263 aa).

Belongs to the UPF0137 (pGP6-D) family.

This chain is Virulence plasmid protein pGP6-D-related protein, found in Chlamydia trachomatis serovar D (strain ATCC VR-885 / DSM 19411 / UW-3/Cx).